The primary structure comprises 291 residues: N-acetylmannosamine kinase (291 aa).

ATP is bound by residues 5–12 (AIDIGGTK) and 132–139 (GVGGGVVC). Zn(2+) contacts are provided by His-156, Cys-166, Cys-168, and Cys-173.

This sequence belongs to the ROK (NagC/XylR) family. NanK subfamily. Homodimer.

It catalyses the reaction an N-acyl-D-mannosamine + ATP = an N-acyl-D-mannosamine 6-phosphate + ADP + H(+). It participates in amino-sugar metabolism; N-acetylneuraminate degradation; D-fructose 6-phosphate from N-acetylneuraminate: step 2/5. In terms of biological role, catalyzes the phosphorylation of N-acetylmannosamine (ManNAc) to ManNAc-6-P. The protein is N-acetylmannosamine kinase of Salmonella paratyphi A (strain ATCC 9150 / SARB42).